Reading from the N-terminus, the 368-residue chain is MNKDNHHIKVSLTNNPYEIVIGKNSLESIGDELFNIGFREGLKVLVVSNKEVSDHYGDCIIKSLIKSKFKPKLLIIKAGEDQKNQSSIDLIHNAAYEARLERGSLMIALGGGVIGDMTGFAAATWLRGVNVVQIPTTLLAMVDASIGGKTGINHSKGKNLIGAFHQPRLVLIDPKTLISLPSREFKAGMAEIIKYGVISDLELFDLLERQENIADLSNIKEKLLLEIIKRSAKSKAEIVIKDEKESGVRAFLNYGHTFGHVIENLCGYGKWLHGEAVAMGMVAVGQLAVQRGLWNEDNAKRQKRLIEKAGLPSNWPKLDIESVLSSLQGDKKVKNGKVSFVMPLKIGDVKLFNNISNKEIRECLQKIS.

Residues 112–116 (GVIGD), 136–137 (TT), K149, and K158 contribute to the NAD(+) site. Zn(2+)-binding residues include E191, H256, and H273.

It belongs to the sugar phosphate cyclases superfamily. Dehydroquinate synthase family. Requires Co(2+) as cofactor. The cofactor is Zn(2+). NAD(+) is required as a cofactor.

The protein resides in the cytoplasm. It carries out the reaction 7-phospho-2-dehydro-3-deoxy-D-arabino-heptonate = 3-dehydroquinate + phosphate. The protein operates within metabolic intermediate biosynthesis; chorismate biosynthesis; chorismate from D-erythrose 4-phosphate and phosphoenolpyruvate: step 2/7. Its function is as follows. Catalyzes the conversion of 3-deoxy-D-arabino-heptulosonate 7-phosphate (DAHP) to dehydroquinate (DHQ). The chain is 3-dehydroquinate synthase from Prochlorococcus marinus (strain NATL1A).